Here is a 374-residue protein sequence, read N- to C-terminus: MYKFYKHKLYKKYQDELWGHIISKKSFSYNKKSILLNYRDIILRNRLRIKTKFKYFRRGFLKNLNYTLLLFKFFRKNIRVFSFKRRQSLSVPLSLSSKRFKTKRKVFFKTSKIASLLKFNIFYANTVAFNKVFIKHNYCLSSCSNIYTQTKLLYFPIISVNRGLVFYKSKNFLRVNNLQFVIKKKLNLRKQKIFFYSVHIAAPKKKTKKWSLFALKNIYYKKVSLFFGFRKVVDFFKVYNLAGALAKGNSFAVFLMLEGRLENFLMRLNLFPSIYFIKKFIEYGNVFVNNKIINYTSYHLNFNEIVSFNKKYYKKLYFFIKSKLRQRKVIINAPSFVEVDYKLLVAMLIRNPDELALTKPLSFNLYTKFLSVNR.

An S4 RNA-binding domain is found at glycine 259–lysine 323.

Belongs to the universal ribosomal protein uS4 family.

It is found in the mitochondrion. This Acanthamoeba castellanii (Amoeba) protein is Small ribosomal subunit protein uS4m (RPS4).